Here is a 78-residue protein sequence, read N- to C-terminus: Large ribosomal subunit protein bL28 (78 aa).

The interval 1 to 21 (MARVCQVTGKGPMTGNNVSHA) is disordered.

This sequence belongs to the bacterial ribosomal protein bL28 family.

This is Large ribosomal subunit protein bL28 from Bordetella petrii (strain ATCC BAA-461 / DSM 12804 / CCUG 43448).